Here is a 177-residue protein sequence, read N- to C-terminus: Large ribosomal subunit protein uL6 (177 aa).

Belongs to the universal ribosomal protein uL6 family. As to quaternary structure, part of the 50S ribosomal subunit.

This protein binds to the 23S rRNA, and is important in its secondary structure. It is located near the subunit interface in the base of the L7/L12 stalk, and near the tRNA binding site of the peptidyltransferase center. The sequence is that of Large ribosomal subunit protein uL6 from Cereibacter sphaeroides (strain ATCC 17029 / ATH 2.4.9) (Rhodobacter sphaeroides).